The sequence spans 296 residues: Nucleotide-binding protein M28_Spy0517 (296 aa).

ATP is bound at residue 13–20; the sequence is GMSGAGKT. GTP is bound at residue 63–66; that stretch reads DMRS.

This sequence belongs to the RapZ-like family.

Functionally, displays ATPase and GTPase activities. This chain is Nucleotide-binding protein M28_Spy0517, found in Streptococcus pyogenes serotype M28 (strain MGAS6180).